A 31-amino-acid polypeptide reads, in one-letter code: Photosystem II reaction center protein T (31 aa).

A helical transmembrane segment spans residues 3–23 (ALVYTFLLIGTLGVIFFAIFF).

This sequence belongs to the PsbT family. As to quaternary structure, PSII is composed of 1 copy each of membrane proteins PsbA, PsbB, PsbC, PsbD, PsbE, PsbF, PsbH, PsbI, PsbJ, PsbK, PsbL, PsbM, PsbT, PsbY, PsbZ, Psb30/Ycf12, at least 3 peripheral proteins of the oxygen-evolving complex and a large number of cofactors. It forms dimeric complexes.

It localises to the plastid. The protein localises to the chloroplast thylakoid membrane. Its function is as follows. Found at the monomer-monomer interface of the photosystem II (PS II) dimer, plays a role in assembly and dimerization of PSII. PSII is a light-driven water plastoquinone oxidoreductase, using light energy to abstract electrons from H(2)O, generating a proton gradient subsequently used for ATP formation. The sequence is that of Photosystem II reaction center protein T from Euglena gracilis.